Consider the following 769-residue polypeptide: 4-hydroxybenzoyl-CoA reductase subunit alpha (769 aa).

Residues glutamine 214, 244 to 245 (GF), 522 to 526 (SSRVT), 650 to 655 (VGKALN), and 722 to 725 (KEAS) each bind Mo-molybdopterin cytosine dinucleotide.

This sequence belongs to the xanthine dehydrogenase family. In terms of assembly, heterohexamer of two alpha, two beta and two gamma subunits. The cofactor is Mo-molybdopterin cytosine dinucleotide. In terms of processing, the N-terminus is blocked.

It catalyses the reaction oxidized 2[4Fe-4S]-[ferredoxin] + benzoyl-CoA + H2O = 4-hydroxybenzoyl-CoA + reduced 2[4Fe-4S]-[ferredoxin] + 2 H(+). Inactivated by low concentrations of cyanide in vitro. Functionally, component of a complex that catalyzes the reductive dehydroxylation of 4-hydroxybenzoyl-CoA to benzoyl-CoA. Reaction is not reversible. Is a key enzyme in the anaerobic degradation of phenolic compounds. The polypeptide is 4-hydroxybenzoyl-CoA reductase subunit alpha (hcrA) (Thauera aromatica).